Reading from the N-terminus, the 128-residue chain is Large ribosomal subunit protein bL12 (128 aa).

It belongs to the bacterial ribosomal protein bL12 family. As to quaternary structure, homodimer. Part of the ribosomal stalk of the 50S ribosomal subunit. Forms a multimeric L10(L12)X complex, where L10 forms an elongated spine to which 2 to 4 L12 dimers bind in a sequential fashion. Binds GTP-bound translation factors.

In terms of biological role, forms part of the ribosomal stalk which helps the ribosome interact with GTP-bound translation factors. Is thus essential for accurate translation. The protein is Large ribosomal subunit protein bL12 of Corynebacterium glutamicum (strain R).